Reading from the N-terminus, the 304-residue chain is Recombination-associated protein RdgC (304 aa).

Belongs to the RdgC family.

Its subcellular location is the cytoplasm. The protein resides in the nucleoid. Functionally, may be involved in recombination. This is Recombination-associated protein RdgC from Shewanella sp. (strain MR-4).